A 401-amino-acid polypeptide reads, in one-letter code: Exodeoxyribonuclease 7 large subunit (401 aa).

This sequence belongs to the XseA family. As to quaternary structure, heterooligomer composed of large and small subunits.

It localises to the cytoplasm. The enzyme catalyses Exonucleolytic cleavage in either 5'- to 3'- or 3'- to 5'-direction to yield nucleoside 5'-phosphates.. Its function is as follows. Bidirectionally degrades single-stranded DNA into large acid-insoluble oligonucleotides, which are then degraded further into small acid-soluble oligonucleotides. In Syntrophotalea carbinolica (strain DSM 2380 / NBRC 103641 / GraBd1) (Pelobacter carbinolicus), this protein is Exodeoxyribonuclease 7 large subunit.